Reading from the N-terminus, the 573-residue chain is Isocitrate dehydrogenase kinase/phosphatase (573 aa).

ATP is bound by residues 318–324 (APGVRGM) and K339. Residue D374 is part of the active site.

This sequence belongs to the AceK family.

The protein resides in the cytoplasm. The catalysed reaction is L-seryl-[isocitrate dehydrogenase] + ATP = O-phospho-L-seryl-[isocitrate dehydrogenase] + ADP + H(+). Functionally, bifunctional enzyme which can phosphorylate or dephosphorylate isocitrate dehydrogenase (IDH) on a specific serine residue. This is a regulatory mechanism which enables bacteria to bypass the Krebs cycle via the glyoxylate shunt in response to the source of carbon. When bacteria are grown on glucose, IDH is fully active and unphosphorylated, but when grown on acetate or ethanol, the activity of IDH declines drastically concomitant with its phosphorylation. This Stutzerimonas stutzeri (strain A1501) (Pseudomonas stutzeri) protein is Isocitrate dehydrogenase kinase/phosphatase.